The chain runs to 177 residues: Translationally-controlled tumor protein homolog (177 aa).

Positions 1-177 constitute a TCTP domain; sequence MIIYRDLFSG…IKQGLVVEKC (177 aa).

The protein belongs to the TCTP family.

It localises to the cytoplasm. Functionally, involved in calcium binding and microtubule stabilization. The chain is Translationally-controlled tumor protein homolog from Trichinella pseudospiralis (Parasitic roundworm).